We begin with the raw amino-acid sequence, 679 residues long: MHSTHPYIYDVIVVGAGHAGCEAAHAAARMGCRTLLLTIDLDKLAHMSCNPSIGGPAKGHLVREIDALGGLMGRVTDRTFIQIRLLNESKGPAVQAPRAQADKRLYAKVMKETLETIPNLDLRQAMIERIILPRPINRNGSDTDDAEALCPGHYAVVTHTRRIYQCRALVLTTGTFLRGRAITGDAIWGAGRAGEAPATALGEDLAALGFPLVRLKTGTPPRIDARTIDFSLTSVQHGSATPLFFGFYYRALNEAPPEPAFGGPPASAYPEPLLDAWRPQLPCYLVHTTPEFHEIVRRNLDRAPLFSGIIEGVGPRYCPSIEDKIVRFADKERHGLFLEPEGWSTHEVYVQGCNTSLPEDVQWAMLRSIPALRRVELMRAGYAIEYDALATGEIAADMSSRRAPGLFFAGQINGTTGYEEAAAQGLMAGINAARFVQGKPSVLLRRDEAYIGVLIDDLVTKEIREPYRMFTSRAEHRLLLRADNADLRLTPLAGELGLVDRERVAVVERKREEVERLLAVLRGKRLYPSAAINARLSAAGIAPLTGEMSAEEVLRRPEVRYRQLQPALDLPACEADVAEQVDIEAKYSGYLLKQQREVERLRRMESRRIPPDFDFAALRGLRNEARQTLQRFRPATIGQAARLAGINPADIALLLVALERQTRQATPVETPHPSLPHTG.

15–20 (GAGHAG) contacts FAD. 314–328 (GPRYCPSIEDKIVRF) is a binding site for NAD(+).

The protein belongs to the MnmG family. As to quaternary structure, homodimer. Heterotetramer of two MnmE and two MnmG subunits. It depends on FAD as a cofactor.

The protein localises to the cytoplasm. NAD-binding protein involved in the addition of a carboxymethylaminomethyl (cmnm) group at the wobble position (U34) of certain tRNAs, forming tRNA-cmnm(5)s(2)U34. The polypeptide is tRNA uridine 5-carboxymethylaminomethyl modification enzyme MnmG (Roseiflexus sp. (strain RS-1)).